We begin with the raw amino-acid sequence, 513 residues long: GMP synthase [glutamine-hydrolyzing] (513 aa).

Residues 3–200 enclose the Glutamine amidotransferase type-1 domain; it reads SVLVLDFGSQ…LITIAGITPD (198 aa). Cys-80 serves as the catalytic Nucleophile. Catalysis depends on residues His-174 and Glu-176. One can recognise a GMPS ATP-PPase domain in the interval 201 to 388; sequence WSSKSFIEHQ…LGIAEDILMR (188 aa). 228–234 contacts ATP; it reads SGGVDST.

As to quaternary structure, homodimer.

It catalyses the reaction XMP + L-glutamine + ATP + H2O = GMP + L-glutamate + AMP + diphosphate + 2 H(+). It functions in the pathway purine metabolism; GMP biosynthesis; GMP from XMP (L-Gln route): step 1/1. Catalyzes the synthesis of GMP from XMP. This Pelodictyon phaeoclathratiforme (strain DSM 5477 / BU-1) protein is GMP synthase [glutamine-hydrolyzing].